The following is a 225-amino-acid chain: Putative tyrosine-protein phosphatase OCA1 (225 aa).

The span at 1-11 shows a compositional bias: acidic residues; sequence MTDNCREDDDN. The segment at 1-24 is disordered; it reads MTDNCREDDDNLGTSGDNALSAPT. Positions 12-24 are enriched in polar residues; sequence LGTSGDNALSAPT. The Tyrosine-protein phosphatase domain maps to 42 to 196; the sequence is NFCPVERYLY…FDTKSVTIDK (155 aa). Catalysis depends on Cys-138, which acts as the Phosphocysteine intermediate.

Belongs to the protein-tyrosine phosphatase family.

Its subcellular location is the cytoplasm. The enzyme catalyses O-phospho-L-tyrosyl-[protein] + H2O = L-tyrosyl-[protein] + phosphate. Putative tyrosine-protein phosphatase required for protection against superoxide stress. This is Putative tyrosine-protein phosphatase OCA1 (OCA1) from Eremothecium gossypii (strain ATCC 10895 / CBS 109.51 / FGSC 9923 / NRRL Y-1056) (Yeast).